A 612-amino-acid chain; its full sequence is Zinc metalloproteinase nas-36 (612 aa).

Positions 1-16 (MLLLVLLFVFISATNA) are cleaved as a signal peptide. The N-linked (GlcNAc...) asparagine glycan is linked to N15. A propeptide spanning residues 17–122 (SDVGRRELEK…KSKPNVRGRR (106 aa)) is cleaved from the precursor. The 198-residue stretch at 123–320 (SFDASPESKW…IETINKAYCS (198 aa)) folds into the Peptidase M12A domain. Residue N163 is glycosylated (N-linked (GlcNAc...) asparagine). 8 disulfide bridges follow: C166/C319, C190/C209, C329/C343, C345/C354, C365/C394, C515/C546, C519/C551, and C531/C536. H217 lines the Zn(2+) pocket. Residue E218 is part of the active site. 2 residues coordinate Zn(2+): H221 and H227. The region spanning 320–355 (SDRCSGSNDCKNGGYPHPKQCDTCLCPNGLSGPKCE) is the EGF-like domain. Residues 365-478 (CGGKIVVKEE…VGFKLQARAT (114 aa)) enclose the CUB domain. The TSP type-1 domain occupies 503-552 (TDQWAEWGSWSQCSRSCGGCGIMSRVRVCRTKQCKGRRQEFSTCNLKACP).

It depends on Zn(2+) as a cofactor.

The protein localises to the secreted. With respect to regulation, inhibited by 1,10-phenanthroline. Metalloprotease. Involved in molting, a process during larval stages in which a new cuticle is formed and the old cuticle is shed. This chain is Zinc metalloproteinase nas-36, found in Haemonchus contortus (Barber pole worm).